The following is a 198-amino-acid chain: Recombination protein RecR (198 aa).

The C4-type zinc-finger motif lies at Cys-57–Cys-72. The Toprim domain maps to Arg-80–Pro-175.

This sequence belongs to the RecR family.

Functionally, may play a role in DNA repair. It seems to be involved in an RecBC-independent recombinational process of DNA repair. It may act with RecF and RecO. This is Recombination protein RecR from Anaeromyxobacter sp. (strain Fw109-5).